An 829-amino-acid polypeptide reads, in one-letter code: High affinity cAMP-specific and IBMX-insensitive 3',5'-cyclic phosphodiesterase 8A (829 aa).

The segment at 16-46 is disordered; the sequence is EDAPSPAAPPLSSGGPRLPQGQKTAALPRTR. The residue at position 20 (S20) is a Phosphoserine. The 71-residue stretch at 213 to 283 folds into the PAS domain; that stretch reads ACNSVFTALE…DTINSCIRIG (71 aa). One can recognise a PAC domain in the interval 287–329; that stretch reads QGIYYAKKKNGDNIQQNVKIIPVIGQGGKIRHYVSIIRVCNGN. Positions 341–360 are disordered; that stretch reads SDTHTDNQTGKHKDRRKGSL. The residue at position 359 (S359) is a Phosphoserine; by PKA. Phosphoserine is present on residues S386 and S457. The tract at residues 454-461 is involved in RAF1-binding; that stretch reads RRLSGNEY. Y461 carries the phosphotyrosine modification. The region spanning 480 to 820 is the PDEase domain; it reads SLDDVPPRIA…KYWKGLDEMK (341 aa). H556 (proton donor) is an active-site residue. Positions 560, 596, 597, and 726 each coordinate a divalent metal cation.

This sequence belongs to the cyclic nucleotide phosphodiesterase family. PDE8 subfamily. As to quaternary structure, interacts with RAF1. The interaction promotes RAF1 activity. A divalent metal cation serves as cofactor. Phosphorylated at Ser-359 by PKA under elevated cAMP conditions, this enhances catalytic activity. As to expression, expressed in most tissues except thymus and peripheral blood leukocytes. Highest levels in testis, ovary, small intestine and colon.

It carries out the reaction 3',5'-cyclic AMP + H2O = AMP + H(+). It functions in the pathway purine metabolism; 3',5'-cyclic AMP degradation; AMP from 3',5'-cyclic AMP: step 1/1. Its activity is regulated as follows. Inhibited by dipyridimole. Insensitive to selective PDE inhibitors including rolipram and zaprinast as well as to the non-selective inhibitor, IBMX. Unaffected by cGMP. Its function is as follows. Hydrolyzes the second messenger cAMP, which is a key regulator of many important physiological processes. May be involved in maintaining basal levels of the cyclic nucleotide and/or in the cAMP regulation of germ cell development. Binding to RAF1 reduces RAF1 'Ser-259' inhibitory-phosphorylation and stimulates RAF1-dependent EGF-activated ERK-signaling. Protects against cell death induced by hydrogen peroxide and staurosporine. The protein is High affinity cAMP-specific and IBMX-insensitive 3',5'-cyclic phosphodiesterase 8A (PDE8A) of Homo sapiens (Human).